The following is a 468-amino-acid chain: GDNF family receptor alpha-1 (468 aa).

The first 24 residues, 1–24, serve as a signal peptide directing secretion; sequence MFLATLYFVLPLLDLLMSAEVSGG. A run of 3 repeats spans residues 25-113, 150-238, and 239-342. Residues cysteine 36 and cysteine 42 are joined by a disulfide bond. N-linked (GlcNAc...) asparagine glycosylation is present at asparagine 59. 10 disulfides stabilise this stretch: cysteine 154/cysteine 214, cysteine 161/cysteine 167, cysteine 178/cysteine 192, cysteine 187/cysteine 233, cysteine 216/cysteine 221, cysteine 243/cysteine 313, cysteine 250/cysteine 256, cysteine 267/cysteine 285, cysteine 277/cysteine 337, and cysteine 315/cysteine 325. Residues asparagine 347 and asparagine 406 are each glycosylated (N-linked (GlcNAc...) asparagine). Residue serine 430 is the site of GPI-anchor amidated serine attachment. The propeptide at 431–468 is removed in mature form; the sequence is HITTKSMAAPPSCGLSSLPVMVFTALAALLSVSLAETS.

The protein belongs to the GDNFR family. In terms of assembly, interacts with GDNF ligand and RET: forms a 2:2:2 ternary complex composed of GDNF ligand, GFRA1 and RET receptor. Interacts with SORL1, either alone or in complex with GDNF. Interaction between SORL1 and GFRA1 leads to GFRA1 internalization, but not degradation. As to expression, expressed in the brain, in hippocampal neurons (at protein level). Isoform 1 and isoform 2 are expressed in heart, brain, lung, liver, kidney and testis.

It is found in the cell membrane. It localises to the golgi apparatus. The protein localises to the trans-Golgi network. The protein resides in the endosome. Its subcellular location is the multivesicular body. Coreceptor for GDNF, a neurotrophic factor that enhances survival and morphological differentiation of dopaminergic neurons and increases their high-affinity dopamine uptake. GDNF-binding leads to autophosphorylation and activation of the RET receptor. The chain is GDNF family receptor alpha-1 (Gfra1) from Mus musculus (Mouse).